Reading from the N-terminus, the 128-residue chain is Large ribosomal subunit protein bL19 (128 aa).

Belongs to the bacterial ribosomal protein bL19 family.

In terms of biological role, this protein is located at the 30S-50S ribosomal subunit interface and may play a role in the structure and function of the aminoacyl-tRNA binding site. The protein is Large ribosomal subunit protein bL19 of Aromatoleum aromaticum (strain DSM 19018 / LMG 30748 / EbN1) (Azoarcus sp. (strain EbN1)).